A 157-amino-acid polypeptide reads, in one-letter code: Nascent polypeptide-associated complex subunit beta-1 (157 aa).

Disordered stretches follow at residues Lys-19–Thr-42 and Glu-126–Glu-157. The NAC-A/B domain occupies Asn-38–Phe-103. Basic and acidic residues predominate over residues Glu-126 to Ala-142. Thr-151 is modified (phosphothreonine).

It belongs to the NAC-beta family. Part of the nascent polypeptide-associated complex (NAC), consisting of EGD2 and either EGD1 or BTT1. NAC associates with ribosomes via EGD1 or BTT1, and with the CCR4-NOT complex.

It is found in the cytoplasm. Its subcellular location is the nucleus. Its function is as follows. Component of the nascent polypeptide-associated complex (NAC), a dynamic component of the ribosomal exit tunnel, protecting the emerging polypeptides from interaction with other cytoplasmic proteins to ensure appropriate nascent protein targeting. The NAC complex also promotes mitochondrial protein import by enhancing productive ribosome interactions with the outer mitochondrial membrane and blocks the inappropriate interaction of ribosomes translating non-secretory nascent polypeptides with translocation sites in the membrane of the endoplasmic reticulum. EGD1 may act as a transcription factor that exert a negative effect on the expression of several genes that are transcribed by RNA polymerase II. The polypeptide is Nascent polypeptide-associated complex subunit beta-1 (EGD1) (Saccharomyces cerevisiae (strain YJM789) (Baker's yeast)).